An 85-amino-acid polypeptide reads, in one-letter code: MVERNLRKTRTGKVVSDKMDKTIVVAVVDNVKHPLYGKIVKRTYKLKAHDENNECQIGDRVKVMETRPLSKDKRWRLVEIIEKAK.

Belongs to the universal ribosomal protein uS17 family. As to quaternary structure, part of the 30S ribosomal subunit.

One of the primary rRNA binding proteins, it binds specifically to the 5'-end of 16S ribosomal RNA. The polypeptide is Small ribosomal subunit protein uS17 (Lachnoclostridium phytofermentans (strain ATCC 700394 / DSM 18823 / ISDg) (Clostridium phytofermentans)).